Reading from the N-terminus, the 425-residue chain is Testicular acid phosphatase (425 aa).

A signal peptide spans Met-1–Pro-27. Residues Glu-28–Pro-392 are Extracellular-facing. Catalysis depends on His-40, which acts as the Nucleophile. Intrachain disulfides connect Cys-158-Cys-378, Cys-213-Cys-311, and Cys-353-Cys-357. Asp-288 serves as the catalytic Proton donor. A helical transmembrane segment spans residues Leu-393–Trp-413. Residues Arg-414 to Val-425 are Cytoplasmic-facing.

The protein belongs to the histidine acid phosphatase family. Homodimer. Glycosylated.

The protein resides in the membrane. The catalysed reaction is a phosphate monoester + H2O = an alcohol + phosphate. Functionally, may dephosphorylate receptor tyrosine-protein kinase ERBB4 and inhibits its ligand-induced proteolytic cleavage. May play a role in odontogenesis. This Mus musculus (Mouse) protein is Testicular acid phosphatase.